The following is a 339-amino-acid chain: D-erythrose-4-phosphate dehydrogenase (339 aa).

An NAD(+)-binding site is contributed by 12–13 (RI). Substrate is bound by residues 154–156 (SCT), R200, 213–214 (TK), and R236. C155 serves as the catalytic Nucleophile. N318 lines the NAD(+) pocket.

The protein belongs to the glyceraldehyde-3-phosphate dehydrogenase family. Epd subfamily. In terms of assembly, homotetramer.

It is found in the cytoplasm. It carries out the reaction D-erythrose 4-phosphate + NAD(+) + H2O = 4-phospho-D-erythronate + NADH + 2 H(+). It participates in cofactor biosynthesis; pyridoxine 5'-phosphate biosynthesis; pyridoxine 5'-phosphate from D-erythrose 4-phosphate: step 1/5. In terms of biological role, catalyzes the NAD-dependent conversion of D-erythrose 4-phosphate to 4-phosphoerythronate. The chain is D-erythrose-4-phosphate dehydrogenase from Proteus mirabilis (strain HI4320).